The chain runs to 261 residues: tRNA pseudouridine synthase A (261 aa).

Residue Asp51 is the Nucleophile of the active site. Tyr109 is a substrate binding site.

Belongs to the tRNA pseudouridine synthase TruA family. In terms of assembly, homodimer.

It carries out the reaction uridine(38/39/40) in tRNA = pseudouridine(38/39/40) in tRNA. Functionally, formation of pseudouridine at positions 38, 39 and 40 in the anticodon stem and loop of transfer RNAs. In Shewanella amazonensis (strain ATCC BAA-1098 / SB2B), this protein is tRNA pseudouridine synthase A.